Reading from the N-terminus, the 406-residue chain is Tyrosine--tRNA ligase (406 aa).

Residue tyrosine 35 participates in L-tyrosine binding. A 'HIGH' region motif is present at residues 40 to 49; that stretch reads PTGPSLHIGH. Residues tyrosine 168 and glutamine 172 each coordinate L-tyrosine. The 'KMSKS' region signature appears at 228–232; sequence KMGKS. Position 231 (lysine 231) interacts with ATP. The 67-residue stretch at 339 to 405 folds into the S4 RNA-binding domain; it reads IGIIDLFAEA…GKKRFMRIIF (67 aa).

This sequence belongs to the class-I aminoacyl-tRNA synthetase family. TyrS type 1 subfamily. Homodimer.

Its subcellular location is the cytoplasm. It carries out the reaction tRNA(Tyr) + L-tyrosine + ATP = L-tyrosyl-tRNA(Tyr) + AMP + diphosphate + H(+). In terms of biological role, catalyzes the attachment of tyrosine to tRNA(Tyr) in a two-step reaction: tyrosine is first activated by ATP to form Tyr-AMP and then transferred to the acceptor end of tRNA(Tyr). This Treponema denticola (strain ATCC 35405 / DSM 14222 / CIP 103919 / JCM 8153 / KCTC 15104) protein is Tyrosine--tRNA ligase.